Reading from the N-terminus, the 246-residue chain is MAFLRSMWGVLSALGRSGAELCTGCGSRLRSPFSFVYLPRWFSSVLASCPKKPVSSYLRFSKEQLPIFKAQNPDAKTTELIRRIAQRWRELPDSKKKIYQDAYRAEWQVYKEEISRFKEQLTPSQIMSLEKEIMDKHLKRKAMTKKKELTLLGKPKRPRSAYNVYVAERFQEAKGDSPQEKLKTVKENWKNLSDSEKELYIQHAKEDETRYHNEMKSWEEQMIEVGRKDLLRRTIKKQRKYGAEEC.

A mitochondrion-targeting transit peptide spans 1 to 42 (MAFLRSMWGVLSALGRSGAELCTGCGSRLRSPFSFVYLPRWF). Positions 50–118 (PKKPVSSYLR…VYKEEISRFK (69 aa)) form a DNA-binding region, HMG box 1. Residues Ser-55, Ser-56, and Ser-61 each carry the phosphoserine; by PKA modification. Thr-122 is modified (phosphothreonine). A DNA-binding region (HMG box 2) is located at residues 155–219 (PKRPRSAYNV…RYHNEMKSWE (65 aa)). Ser-160 is subject to Phosphoserine; by PKA. A phosphoserine mark is found at Ser-193 and Ser-195.

As to quaternary structure, monomer; binds DNA as a monomer. Homodimer. Component of the mitochondrial transcription initiation complex, composed at least of TFB2M, TFAM and POLRMT. In this complex TFAM recruits POLRMT to the promoter whereas TFB2M induces structural changes in POLRMT to enable promoter opening and trapping of the DNA non-template strand. Upon metabolic stress, forms a complex composed of FOXO3, SIRT3, TFAM and POLRMT. Interacts with TFB1M and TFB2M. Interacts with CLPX; this enhances DNA-binding. In terms of processing, phosphorylation by PKA within the HMG box 1 impairs DNA binding and promotes degradation by the AAA+ Lon protease.

Its subcellular location is the mitochondrion. The protein localises to the mitochondrion matrix. The protein resides in the mitochondrion nucleoid. Binds to the mitochondrial light strand promoter and functions in mitochondrial transcription regulation. Component of the mitochondrial transcription initiation complex, composed at least of TFB2M, TFAM and POLRMT that is required for basal transcription of mitochondrial DNA. In this complex, TFAM recruits POLRMT to a specific promoter whereas TFB2M induces structural changes in POLRMT to enable promoter opening and trapping of the DNA non-template strand. Required for accurate and efficient promoter recognition by the mitochondrial RNA polymerase. Promotes transcription initiation from the HSP1 and the light strand promoter by binding immediately upstream of transcriptional start sites. Is able to unwind DNA. Bends the mitochondrial light strand promoter DNA into a U-turn shape via its HMG boxes. Required for maintenance of normal levels of mitochondrial DNA. May play a role in organizing and compacting mitochondrial DNA. This is Transcription factor A, mitochondrial from Homo sapiens (Human).